The following is a 189-amino-acid chain: Ribosome maturation factor RimP (189 aa).

The protein belongs to the RimP family.

It localises to the cytoplasm. In terms of biological role, required for maturation of 30S ribosomal subunits. In Corynebacterium kroppenstedtii (strain DSM 44385 / JCM 11950 / CIP 105744 / CCUG 35717), this protein is Ribosome maturation factor RimP.